Here is a 268-residue protein sequence, read N- to C-terminus: Octanoyltransferase (268 aa).

Positions 47–243 (PETPDQVWLV…ALCEVLAAHE (197 aa)) constitute a BPL/LPL catalytic domain. Residues 87-94 (RGGQITYH), 159-161 (ALG), and 172-174 (GVS) contribute to the substrate site. The Acyl-thioester intermediate role is filled by cysteine 190.

This sequence belongs to the LipB family.

The protein localises to the cytoplasm. The enzyme catalyses octanoyl-[ACP] + L-lysyl-[protein] = N(6)-octanoyl-L-lysyl-[protein] + holo-[ACP] + H(+). The protein operates within protein modification; protein lipoylation via endogenous pathway; protein N(6)-(lipoyl)lysine from octanoyl-[acyl-carrier-protein]: step 1/2. In terms of biological role, catalyzes the transfer of endogenously produced octanoic acid from octanoyl-acyl-carrier-protein onto the lipoyl domains of lipoate-dependent enzymes. Lipoyl-ACP can also act as a substrate although octanoyl-ACP is likely to be the physiological substrate. The chain is Octanoyltransferase from Cupriavidus necator (strain ATCC 17699 / DSM 428 / KCTC 22496 / NCIMB 10442 / H16 / Stanier 337) (Ralstonia eutropha).